A 332-amino-acid polypeptide reads, in one-letter code: tRNA-dihydrouridine(20/20a) synthase (332 aa).

Residues 19-21 (PML) and glutamine 71 contribute to the FMN site. Residue cysteine 101 is the Proton donor of the active site. Residues lysine 140, histidine 173, 213 to 215 (NGG), and 235 to 236 (GR) each bind FMN.

Belongs to the Dus family. DusA subfamily. The cofactor is FMN.

It catalyses the reaction 5,6-dihydrouridine(20) in tRNA + NADP(+) = uridine(20) in tRNA + NADPH + H(+). It carries out the reaction 5,6-dihydrouridine(20) in tRNA + NAD(+) = uridine(20) in tRNA + NADH + H(+). The enzyme catalyses 5,6-dihydrouridine(20a) in tRNA + NADP(+) = uridine(20a) in tRNA + NADPH + H(+). The catalysed reaction is 5,6-dihydrouridine(20a) in tRNA + NAD(+) = uridine(20a) in tRNA + NADH + H(+). Functionally, catalyzes the synthesis of 5,6-dihydrouridine (D), a modified base found in the D-loop of most tRNAs, via the reduction of the C5-C6 double bond in target uridines. Specifically modifies U20 and U20a in tRNAs. This Salmonella typhi protein is tRNA-dihydrouridine(20/20a) synthase.